A 478-amino-acid polypeptide reads, in one-letter code: 3-isopropylmalate dehydratase large subunit (478 aa).

[4Fe-4S] cluster contacts are provided by cysteine 355, cysteine 415, and cysteine 418.

It belongs to the aconitase/IPM isomerase family. LeuC type 1 subfamily. In terms of assembly, heterodimer of LeuC and LeuD. [4Fe-4S] cluster is required as a cofactor.

The enzyme catalyses (2R,3S)-3-isopropylmalate = (2S)-2-isopropylmalate. Its pathway is amino-acid biosynthesis; L-leucine biosynthesis; L-leucine from 3-methyl-2-oxobutanoate: step 2/4. Its function is as follows. Catalyzes the isomerization between 2-isopropylmalate and 3-isopropylmalate, via the formation of 2-isopropylmaleate. This chain is 3-isopropylmalate dehydratase large subunit, found in Paracoccus denitrificans (strain Pd 1222).